The following is a 273-amino-acid chain: Putative phosphoenolpyruvate synthase regulatory protein (273 aa).

153–160 serves as a coordination point for ADP; that stretch reads AVSRAGKT.

Belongs to the pyruvate, phosphate/water dikinase regulatory protein family. PSRP subfamily.

The enzyme catalyses [pyruvate, water dikinase] + ADP = [pyruvate, water dikinase]-phosphate + AMP + H(+). It carries out the reaction [pyruvate, water dikinase]-phosphate + phosphate + H(+) = [pyruvate, water dikinase] + diphosphate. In terms of biological role, bifunctional serine/threonine kinase and phosphorylase involved in the regulation of the phosphoenolpyruvate synthase (PEPS) by catalyzing its phosphorylation/dephosphorylation. The protein is Putative phosphoenolpyruvate synthase regulatory protein of Xylella fastidiosa (strain 9a5c).